The primary structure comprises 320 residues: 4-hydroxy-3-methylbut-2-enyl diphosphate reductase 2 (320 aa).

Cys18 contributes to the [4Fe-4S] cluster binding site. Positions 47 and 81 each coordinate (2E)-4-hydroxy-3-methylbut-2-enyl diphosphate. Dimethylallyl diphosphate is bound by residues His47 and His81. Positions 47 and 81 each coordinate isopentenyl diphosphate. [4Fe-4S] cluster is bound at residue Cys103. His131 contacts (2E)-4-hydroxy-3-methylbut-2-enyl diphosphate. His131 lines the dimethylallyl diphosphate pocket. Residue His131 participates in isopentenyl diphosphate binding. Residue Glu133 is the Proton donor of the active site. Residue Thr172 coordinates (2E)-4-hydroxy-3-methylbut-2-enyl diphosphate. Cys202 is a [4Fe-4S] cluster binding site. The (2E)-4-hydroxy-3-methylbut-2-enyl diphosphate site is built by Ser230, Ser231, Asn232, and Ser275. Residues Ser230, Ser231, Asn232, and Ser275 each coordinate dimethylallyl diphosphate. Ser230, Ser231, Asn232, and Ser275 together coordinate isopentenyl diphosphate.

This sequence belongs to the IspH family. The cofactor is [4Fe-4S] cluster.

It carries out the reaction isopentenyl diphosphate + 2 oxidized [2Fe-2S]-[ferredoxin] + H2O = (2E)-4-hydroxy-3-methylbut-2-enyl diphosphate + 2 reduced [2Fe-2S]-[ferredoxin] + 2 H(+). The catalysed reaction is dimethylallyl diphosphate + 2 oxidized [2Fe-2S]-[ferredoxin] + H2O = (2E)-4-hydroxy-3-methylbut-2-enyl diphosphate + 2 reduced [2Fe-2S]-[ferredoxin] + 2 H(+). The protein operates within isoprenoid biosynthesis; dimethylallyl diphosphate biosynthesis; dimethylallyl diphosphate from (2E)-4-hydroxy-3-methylbutenyl diphosphate: step 1/1. It participates in isoprenoid biosynthesis; isopentenyl diphosphate biosynthesis via DXP pathway; isopentenyl diphosphate from 1-deoxy-D-xylulose 5-phosphate: step 6/6. Its function is as follows. Catalyzes the conversion of 1-hydroxy-2-methyl-2-(E)-butenyl 4-diphosphate (HMBPP) into a mixture of isopentenyl diphosphate (IPP) and dimethylallyl diphosphate (DMAPP). Acts in the terminal step of the DOXP/MEP pathway for isoprenoid precursor biosynthesis. The chain is 4-hydroxy-3-methylbut-2-enyl diphosphate reductase 2 from Rhodopseudomonas palustris (strain ATCC BAA-98 / CGA009).